The primary structure comprises 872 residues: MKELSSAQIRQMWLDFWKSKGHCVEPSANLVPVNDPTLLWINSGVATLKKYFDGSVIPENPRITNAQKSIRTNDIENVGKTARHHTMFEMLGNFSIGDYFRDEAIEWGFELLTSPDWFDFPKDKLYMTYYPDDKDSYNRWIACGVEPSHLVPIEDNFWEIGAGPSGPDTEIFFDRGEDFDPENIGLRLLAEDIENDRYIEIWNIVLSQFNADPAVPRSEYKELPNKNIDTGAGLERLAAVMQGAKTNFETDLFMPIIREVEKLSGKTYDPDGDNMSFKVIADHIRALSFAIGDGALPGNEGRGYVLRRLLRRAVMHGRRLGINETFLYKLVPTVGQIMESYYPEVLEKRDFIEKIVKREEETFARTIDAGSGHLDSLLAQLKAEGKDTLEGKDIFKLYDTYGFPVELTEELAEDAGYKIDHEGFKSAMKEQQDRARAAVVKGGSMGMQNETLAGIVEESRFEYDTYSLESSLSVIIADNERTEAVSEGQALLVFAQTPFYAEMGGQVADTGRIKNDKGDTVAEVVDVQKAPNGQPLHTVNVLASLSVGTNYTLEINKERRLAVEKNHTATHLLHAALHNVIGEHATQAGSLNEEEFLRFDFTHFEAVSNEELRHIEQEVNEQIWNALTITTTETDVETAKEMGAMALFGEKYGKVVRVVQIGNYSVELCGGTHLNNSSEIGLFKIVKEEGIGSGTRRIIAVTGRQAFEAYRNQEDALKEIAATVKAPQLKDAAAKVQALSDSLRDLQKENAELKEKAAAAAAGDVFKDVQEAKGVRFIASQVDVADAGALRTFADNWKQKDYSDVLVLVAAIGEKVNVLVASKTKDVHAGNMIKELAPIVAGRGGGKPDMAMAGGSDASKIAELLAAVAEIV.

Residues H567, H571, C669, and H673 each coordinate Zn(2+).

Belongs to the class-II aminoacyl-tRNA synthetase family. The cofactor is Zn(2+).

The protein resides in the cytoplasm. The catalysed reaction is tRNA(Ala) + L-alanine + ATP = L-alanyl-tRNA(Ala) + AMP + diphosphate. In terms of biological role, catalyzes the attachment of alanine to tRNA(Ala) in a two-step reaction: alanine is first activated by ATP to form Ala-AMP and then transferred to the acceptor end of tRNA(Ala). Also edits incorrectly charged Ser-tRNA(Ala) and Gly-tRNA(Ala) via its editing domain. This chain is Alanine--tRNA ligase, found in Streptococcus pyogenes serotype M1.